We begin with the raw amino-acid sequence, 357 residues long: Guanine nucleotide-binding protein alpha-1 subunit (357 aa).

The N-myristoyl glycine moiety is linked to residue G2. C4 is lipidated: S-palmitoyl cysteine. The 326-residue stretch at 32 to 357 (NVIKLLLLGA…SSKLKGCGLF (326 aa)) folds into the G-alpha domain. The segment at 35 to 48 (KLLLLGAGESGKST) is G1 motif. E43, S44, G45, K46, S47, T48, D151, L176, T182, G204, N270, K271, D273, and A329 together coordinate GTP. S47 lines the Mg(2+) pocket. Residues 174 to 182 (DILHTRVPT) are G2 motif. T182 provides a ligand contact to Mg(2+). The tract at residues 197 to 206 (FRVFDVGGQR) is G3 motif. The G4 motif stretch occupies residues 266 to 273 (ILFLNKVD). The interval 327 to 332 (TCATDT) is G5 motif.

This sequence belongs to the G-alpha family. G(q) subfamily. In terms of assembly, g proteins are composed of 3 units; alpha, beta and gamma. The alpha chain contains the guanine nucleotide binding site. Requires Mg(2+) as cofactor.

Guanine nucleotide-binding proteins (G proteins) are involved as modulators or transducers in various transmembrane signaling systems. This is Guanine nucleotide-binding protein alpha-1 subunit (gpa-1) from Caenorhabditis briggsae.